The following is a 335-amino-acid chain: Trans-3-hydroxy-L-proline dehydratase (335 aa).

The active-site Proton acceptor is C91. Substrate contacts are provided by residues 92-93 (GH), H222, and 256-257 (GS).

Belongs to the proline racemase family. As to quaternary structure, homodimer.

The catalysed reaction is trans-3-hydroxy-L-proline = 1-pyrroline-2-carboxylate + H2O. Catalyzes the dehydration of trans-3-hydroxy-L-proline (t3LHyp) to Delta(1)-pyrroline-2-carboxylate (Pyr2C). Does not possess neither proline racemase nor 4-hydroxyproline 2-epimerase activities. The sequence is that of Trans-3-hydroxy-L-proline dehydratase from Burkholderia cenocepacia (strain HI2424).